Reading from the N-terminus, the 240-residue chain is MLTRKQQELLLFIHERMKESGVPPSFDEMKDALDLASKSGIHRLITALEERGFIRRLPNRARALEVIKLPEAYSPSLQPRRGFSPSVIEGSLGKPQPVQPPAPAKPANDENNSAVSVPVMGRIAAGVPISAIQNNTHDITVPADMLGSGEHYALEVKGDSMIDAGIFDGDTVIIRNSTTANPGDIVVALVDDEEATLKRFRRKGASIALEAANPAYETRIFGPDRVKVQGKLVGLIRRYH.

The segment at residues 26–46 (FDEMKDALDLASKSGIHRLIT) is a DNA-binding region (H-T-H motif). The interval 78–113 (QPRRGFSPSVIEGSLGKPQPVQPPAPAKPANDENNS) is disordered. Active-site for autocatalytic cleavage activity residues include serine 160 and lysine 198.

Belongs to the peptidase S24 family. As to quaternary structure, homodimer.

It carries out the reaction Hydrolysis of Ala-|-Gly bond in repressor LexA.. Its function is as follows. Represses a number of genes involved in the response to DNA damage (SOS response), including recA and lexA. In the presence of single-stranded DNA, RecA interacts with LexA causing an autocatalytic cleavage which disrupts the DNA-binding part of LexA, leading to derepression of the SOS regulon and eventually DNA repair. This is LexA repressor from Rhizobium rhizogenes (strain K84 / ATCC BAA-868) (Agrobacterium radiobacter).